A 380-amino-acid polypeptide reads, in one-letter code: Cobalt-precorrin-5B C(1)-methyltransferase (380 aa).

This sequence belongs to the CbiD family.

It carries out the reaction Co-precorrin-5B + S-adenosyl-L-methionine = Co-precorrin-6A + S-adenosyl-L-homocysteine. Its pathway is cofactor biosynthesis; adenosylcobalamin biosynthesis; cob(II)yrinate a,c-diamide from sirohydrochlorin (anaerobic route): step 6/10. Its function is as follows. Catalyzes the methylation of C-1 in cobalt-precorrin-5B to form cobalt-precorrin-6A. The sequence is that of Cobalt-precorrin-5B C(1)-methyltransferase from Methanosphaera stadtmanae (strain ATCC 43021 / DSM 3091 / JCM 11832 / MCB-3).